The sequence spans 737 residues: Phosphoribosylformylglycinamidine synthase subunit PurL (737 aa).

Histidine 50 is an active-site residue. Residues tyrosine 53 and lysine 92 each contribute to the ATP site. Mg(2+) is bound at residue glutamate 94. Substrate contacts are provided by residues 95-98 (SHNH) and arginine 117. The active-site Proton acceptor is the histidine 96. Aspartate 118 contacts Mg(2+). Glutamine 241 provides a ligand contact to substrate. Aspartate 269 contributes to the Mg(2+) binding site. 313–315 (ESQ) serves as a coordination point for substrate. ATP is bound by residues aspartate 494 and glycine 531. Position 532 (asparagine 532) interacts with Mg(2+). Substrate is bound at residue serine 534.

The protein belongs to the FGAMS family. Monomer. Part of the FGAM synthase complex composed of 1 PurL, 1 PurQ and 2 PurS subunits.

The protein localises to the cytoplasm. It catalyses the reaction N(2)-formyl-N(1)-(5-phospho-beta-D-ribosyl)glycinamide + L-glutamine + ATP + H2O = 2-formamido-N(1)-(5-O-phospho-beta-D-ribosyl)acetamidine + L-glutamate + ADP + phosphate + H(+). The protein operates within purine metabolism; IMP biosynthesis via de novo pathway; 5-amino-1-(5-phospho-D-ribosyl)imidazole from N(2)-formyl-N(1)-(5-phospho-D-ribosyl)glycinamide: step 1/2. Part of the phosphoribosylformylglycinamidine synthase complex involved in the purines biosynthetic pathway. Catalyzes the ATP-dependent conversion of formylglycinamide ribonucleotide (FGAR) and glutamine to yield formylglycinamidine ribonucleotide (FGAM) and glutamate. The FGAM synthase complex is composed of three subunits. PurQ produces an ammonia molecule by converting glutamine to glutamate. PurL transfers the ammonia molecule to FGAR to form FGAM in an ATP-dependent manner. PurS interacts with PurQ and PurL and is thought to assist in the transfer of the ammonia molecule from PurQ to PurL. This chain is Phosphoribosylformylglycinamidine synthase subunit PurL, found in Rhodopseudomonas palustris (strain BisA53).